The primary structure comprises 504 residues: UDP-N-acetylmuramoylalanine--D-glutamate ligase (504 aa).

Residue 129-135 (GTNGKTT) participates in ATP binding.

This sequence belongs to the MurCDEF family.

Its subcellular location is the cytoplasm. The enzyme catalyses UDP-N-acetyl-alpha-D-muramoyl-L-alanine + D-glutamate + ATP = UDP-N-acetyl-alpha-D-muramoyl-L-alanyl-D-glutamate + ADP + phosphate + H(+). It participates in cell wall biogenesis; peptidoglycan biosynthesis. In terms of biological role, cell wall formation. Catalyzes the addition of glutamate to the nucleotide precursor UDP-N-acetylmuramoyl-L-alanine (UMA). The chain is UDP-N-acetylmuramoylalanine--D-glutamate ligase from Cupriavidus metallidurans (strain ATCC 43123 / DSM 2839 / NBRC 102507 / CH34) (Ralstonia metallidurans).